A 92-amino-acid chain; its full sequence is MSRSVWKGPFVDGYLLKKAEEARSSEKRAVIKTWSRRSTILPQFVGLNFQVHNGNKFIPVTVTDEMVGHKLGEFAPTRTYYGHGADKKAKRK.

This sequence belongs to the universal ribosomal protein uS19 family.

Functionally, protein S19 forms a complex with S13 that binds strongly to the 16S ribosomal RNA. The chain is Small ribosomal subunit protein uS19 from Hyphomonas neptunium (strain ATCC 15444).